Here is a 739-residue protein sequence, read N- to C-terminus: Phosphoribosylformylglycinamidine synthase subunit PurL (739 aa).

The active site involves histidine 54. The ATP site is built by tyrosine 57 and lysine 96. Glutamate 98 contacts Mg(2+). Residues 99–102 (SHNH) and arginine 121 each bind substrate. Histidine 100 functions as the Proton acceptor in the catalytic mechanism. Residue aspartate 122 participates in Mg(2+) binding. Position 245 (glutamine 245) interacts with substrate. Aspartate 273 serves as a coordination point for Mg(2+). Substrate is bound at residue 317-319 (ESQ). Aspartate 500 and glycine 537 together coordinate ATP. Residue asparagine 538 coordinates Mg(2+). Substrate is bound at residue serine 540.

It belongs to the FGAMS family. As to quaternary structure, monomer. Part of the FGAM synthase complex composed of 1 PurL, 1 PurQ and 2 PurS subunits.

Its subcellular location is the cytoplasm. It carries out the reaction N(2)-formyl-N(1)-(5-phospho-beta-D-ribosyl)glycinamide + L-glutamine + ATP + H2O = 2-formamido-N(1)-(5-O-phospho-beta-D-ribosyl)acetamidine + L-glutamate + ADP + phosphate + H(+). It participates in purine metabolism; IMP biosynthesis via de novo pathway; 5-amino-1-(5-phospho-D-ribosyl)imidazole from N(2)-formyl-N(1)-(5-phospho-D-ribosyl)glycinamide: step 1/2. In terms of biological role, part of the phosphoribosylformylglycinamidine synthase complex involved in the purines biosynthetic pathway. Catalyzes the ATP-dependent conversion of formylglycinamide ribonucleotide (FGAR) and glutamine to yield formylglycinamidine ribonucleotide (FGAM) and glutamate. The FGAM synthase complex is composed of three subunits. PurQ produces an ammonia molecule by converting glutamine to glutamate. PurL transfers the ammonia molecule to FGAR to form FGAM in an ATP-dependent manner. PurS interacts with PurQ and PurL and is thought to assist in the transfer of the ammonia molecule from PurQ to PurL. In Bacillus cereus (strain G9842), this protein is Phosphoribosylformylglycinamidine synthase subunit PurL.